Reading from the N-terminus, the 264-residue chain is Protein FAM228B (264 aa).

It belongs to the FAM228 family.

The sequence is that of Protein FAM228B (FAM228B) from Bos taurus (Bovine).